A 60-amino-acid chain; its full sequence is Probable UDP-arabinopyranose mutase 1 (60 aa).

Belongs to the RGP family. In terms of assembly, homopentamer or homohexamer. It depends on Mn(2+) as a cofactor. Mg(2+) serves as cofactor.

Its subcellular location is the secreted. The protein resides in the cell wall. The protein localises to the cell junction. It is found in the plasmodesma. It localises to the golgi apparatus. It carries out the reaction UDP-beta-L-arabinofuranose = UDP-beta-L-arabinopyranose. In terms of biological role, probable UDP-L-arabinose mutase involved in the biosynthesis of cell wall non-cellulosic polysaccharides. The protein is Probable UDP-arabinopyranose mutase 1 of Phoenix dactylifera (Date palm).